A 1124-amino-acid polypeptide reads, in one-letter code: Eukaryotic translation initiation factor 3 subunit A (1124 aa).

Residues 96–124 are a coiled coil; that stretch reads LKMAEERTEQAQQQSSQATVDIDDLDNLA. A PCI domain is found at 317–498; it reads IQRMTTHVLI…ECVHFGTDLS (182 aa). 2 stretches are compositionally biased toward basic and acidic residues: residues 812–851 and 860–883; these read EERR…RQLA and EVER…ERRP. The segment at 812-1124 is disordered; the sequence is EERRRIEEEL…EEGWTDVKHR (313 aa). Over residues 900-910 the composition is skewed to low complexity; it reads PAAAAPANPAA. Composition is skewed to basic and acidic residues over residues 928-952, 960-990, 1007-1048, and 1063-1100; these read PRER…EKDG, RGGD…DRGP, PRRD…RGGG, and DDNR…EARP.

This sequence belongs to the eIF-3 subunit A family. Component of the eukaryotic translation initiation factor 3 (eIF-3) complex.

It is found in the cytoplasm. In terms of biological role, RNA-binding component of the eukaryotic translation initiation factor 3 (eIF-3) complex, which is involved in protein synthesis of a specialized repertoire of mRNAs and, together with other initiation factors, stimulates binding of mRNA and methionyl-tRNAi to the 40S ribosome. The eIF-3 complex specifically targets and initiates translation of a subset of mRNAs involved in cell proliferation. The chain is Eukaryotic translation initiation factor 3 subunit A from Anopheles gambiae (African malaria mosquito).